Reading from the N-terminus, the 306-residue chain is 3-methyl-2-oxobutanoate hydroxymethyltransferase (306 aa).

Mg(2+) contacts are provided by Asp53 and Asp96. Residues 53 to 54 (DS), Asp96, and Lys126 each bind 3-methyl-2-oxobutanoate. Glu128 provides a ligand contact to Mg(2+). Glu195 functions as the Proton acceptor in the catalytic mechanism.

This sequence belongs to the PanB family. In terms of assembly, homodecamer; pentamer of dimers. Mg(2+) is required as a cofactor.

It localises to the cytoplasm. The enzyme catalyses 3-methyl-2-oxobutanoate + (6R)-5,10-methylene-5,6,7,8-tetrahydrofolate + H2O = 2-dehydropantoate + (6S)-5,6,7,8-tetrahydrofolate. It participates in cofactor biosynthesis; (R)-pantothenate biosynthesis; (R)-pantoate from 3-methyl-2-oxobutanoate: step 1/2. Catalyzes the reversible reaction in which hydroxymethyl group from 5,10-methylenetetrahydrofolate is transferred onto alpha-ketoisovalerate to form ketopantoate. The sequence is that of 3-methyl-2-oxobutanoate hydroxymethyltransferase from Anaeromyxobacter sp. (strain K).